An 862-amino-acid polypeptide reads, in one-letter code: Semaphorin-4D (862 aa).

A signal peptide spans 1 to 21; sequence MRMCTPIRGLLMALAVMFGTA. The Sema domain maps to 22–500; that stretch reads MAFAPIPRIT…SNSGVVQAPL (479 aa). Residues 22 to 734 lie on the Extracellular side of the membrane; it reads MAFAPIPRIT…TMYLKSSDNR (713 aa). N-linked (GlcNAc...) asparagine glycosylation is found at N49 and N77. 2 disulfide bridges follow: C97/C108 and C126/C135. Residues N139 and N191 are each glycosylated (N-linked (GlcNAc...) asparagine). 2 cysteine pairs are disulfide-bonded: C257–C370 and C281–C326. N329, N379, and N419 each carry an N-linked (GlcNAc...) asparagine glycan. Residues 502–551 form the PSI domain; sequence FCGKHGTCEDCVLARDPYCAWSPPTATCVALHQTESPSRGLIQEMSGDAS. Intrachain disulfides connect C503/C520, C509/C553, C512/C529, and C576/C624. In terms of domain architecture, Ig-like C2-type spans 554-636; sequence PDKSKGSYRQ…EERVKNKTVF (83 aa). N-linked (GlcNAc...) asparagine glycosylation is found at N613 and N632. A helical membrane pass occupies residues 735–755; it reads LLMSLFLFFFVLFLCLFFYNC. Residues 756-862 lie on the Cytoplasmic side of the membrane; it reads YKGYLPRQCL…KFADSDADGD (107 aa). The segment at 794–837 is disordered; the sequence is VEPGSFSQQNGEHPKPALDTGYETEQDTITSKVPTDREDSQRID. Over residues 827-837 the composition is skewed to basic and acidic residues; the sequence is PTDREDSQRID. Phosphoserine is present on S833.

This sequence belongs to the semaphorin family. As to quaternary structure, homodimer. Interacts with PLXNB2. Interacts with PLXNB1. As to expression, strongly expressed in skeletal muscle, peripheral blood lymphocytes, spleen, and thymus and also expressed at lower levels in testes, brain, kidney, small intestine, prostate, heart, placenta, lung and pancreas, but not in colon and liver.

It is found in the cell membrane. Its function is as follows. Cell surface receptor for PLXNB1 and PLXNB2 that plays an important role in cell-cell signaling. Regulates GABAergic synapse development. Promotes the development of inhibitory synapses in a PLXNB1-dependent manner. Modulates the complexity and arborization of developing neurites in hippocampal neurons by activating PLXNB1 and interaction with PLXNB1 mediates activation of RHOA. Promotes the migration of cerebellar granule cells. Plays a role in the immune system; induces B-cells to aggregate and improves their viability (in vitro). Induces endothelial cell migration through the activation of PTK2B/PYK2, SRC, and the phosphatidylinositol 3-kinase-AKT pathway. The polypeptide is Semaphorin-4D (SEMA4D) (Homo sapiens (Human)).